The chain runs to 304 residues: Glycine--tRNA ligase alpha subunit (304 aa).

The protein belongs to the class-II aminoacyl-tRNA synthetase family. Tetramer of two alpha and two beta subunits.

It localises to the cytoplasm. It carries out the reaction tRNA(Gly) + glycine + ATP = glycyl-tRNA(Gly) + AMP + diphosphate. This chain is Glycine--tRNA ligase alpha subunit, found in Streptococcus agalactiae serotype III (strain NEM316).